The primary structure comprises 122 residues: Fluoride-specific ion channel FluC (122 aa).

Helical transmembrane passes span Phe5 to Ile25, Phe29 to Leu49, Phe65 to Phe85, and Phe93 to Phe113. 2 residues coordinate Na(+): Gly72 and Thr75.

It belongs to the fluoride channel Fluc/FEX (TC 1.A.43) family.

Its subcellular location is the cell membrane. It carries out the reaction fluoride(in) = fluoride(out). Na(+) is not transported, but it plays an essential structural role and its presence is essential for fluoride channel function. Functionally, fluoride-specific ion channel. Important for reducing fluoride concentration in the cell, thus reducing its toxicity. This is Fluoride-specific ion channel FluC from Methanococcus vannielii (strain ATCC 35089 / DSM 1224 / JCM 13029 / OCM 148 / SB).